A 526-amino-acid polypeptide reads, in one-letter code: Lysine--tRNA ligase (526 aa).

Mg(2+) contacts are provided by glutamate 431 and glutamate 438.

It belongs to the class-II aminoacyl-tRNA synthetase family. In terms of assembly, homodimer. It depends on Mg(2+) as a cofactor.

The protein resides in the cytoplasm. It carries out the reaction tRNA(Lys) + L-lysine + ATP = L-lysyl-tRNA(Lys) + AMP + diphosphate. The polypeptide is Lysine--tRNA ligase (Chlamydia felis (strain Fe/C-56) (Chlamydophila felis)).